Here is a 94-residue protein sequence, read N- to C-terminus: Large ribosomal subunit protein eL43A (94 aa).

Residues 39 to 62 (CPFCGRNTVKRTAAGIWCCNGKGC) form a C4-type zinc finger.

The protein belongs to the eukaryotic ribosomal protein eL43 family. As to quaternary structure, component of the large ribosomal subunit (LSU). Mature yeast ribosomes consist of a small (40S) and a large (60S) subunit. The 40S small subunit contains 1 molecule of ribosomal RNA (18S rRNA) and at least 33 different proteins. The large 60S subunit contains 3 rRNA molecules (25S, 5.8S and 5S rRNA) and at least 46 different proteins.

It localises to the cytoplasm. In terms of biological role, component of the ribosome, a large ribonucleoprotein complex responsible for the synthesis of proteins in the cell. The small ribosomal subunit (SSU) binds messenger RNAs (mRNAs) and translates the encoded message by selecting cognate aminoacyl-transfer RNA (tRNA) molecules. The large subunit (LSU) contains the ribosomal catalytic site termed the peptidyl transferase center (PTC), which catalyzes the formation of peptide bonds, thereby polymerizing the amino acids delivered by tRNAs into a polypeptide chain. The nascent polypeptides leave the ribosome through a tunnel in the LSU and interact with protein factors that function in enzymatic processing, targeting, and the membrane insertion of nascent chains at the exit of the ribosomal tunnel. The chain is Large ribosomal subunit protein eL43A (rpl4301) from Schizosaccharomyces pombe (strain 972 / ATCC 24843) (Fission yeast).